Here is a 183-residue protein sequence, read N- to C-terminus: Gamma-crystallin N-A (183 aa).

4 consecutive Beta/gamma crystallin 'Greek key' domains span residues 6 to 46 (GKIV…RVES), 47 to 89 (GAWV…KPIK), 95 to 136 (YRME…KVYG), and 138 to 180 (GAWA…RRVV).

The protein belongs to the beta/gamma-crystallin family. Monomer.

Crystallins are the dominant structural components of the vertebrate eye lens. The polypeptide is Gamma-crystallin N-A (crygna) (Danio rerio (Zebrafish)).